The chain runs to 1441 residues: Pleiotropic drug resistance protein TUR2 (1441 aa).

The 273-residue stretch at 158–430 folds into the ABC transporter 1 domain; sequence LSALHLMPSG…FESMGFKCPE (273 aa). Position 191–198 (191–198) interacts with ATP; it reads GPPGAGKT. In terms of domain architecture, ABC transmembrane type-2 1 spans 508–721; the sequence is ELLKACIDRE…AQNAIAVNEF (214 aa). Transmembrane regions (helical) follow at residues 526-546, 559-579, 614-634, 646-666, 671-691, and 756-776; these read FVYIFKVVQLIVLALIAMTVF, ATIFFGAMFLGLVTHLFNGFA, IPISFVECGVWIAMTYYVIGF, LLLVLISQVASGLFRLLAAVG, VADTFGAFAQLVLLVLGGFII, and IGVGALIGYMVLFNFLFILFL. Residues 843-1095 enclose the ABC transporter 2 domain; sequence ITFDNVKYSV…HLIKYFESID (253 aa). 888–895 serves as a coordination point for ATP; sequence GVSGRGKT. One can recognise an ABC transmembrane type-2 2 domain in the interval 1168-1382; sequence MQCLACLWKQ…TLYGLVVSQF (215 aa). Helical transmembrane passes span 1187 to 1207, 1215 to 1235, 1275 to 1295, 1302 to 1322, 1332 to 1352, 1363 to 1383, and 1413 to 1433; these read YTATRLFFTVVIALIFGTIFW, TSLDLINAMGSMYAAVLFIGI, VPHILVQTLLYGLLVYSMIGF, FLWYMFFMFFTFLYFTYYGMM, IAAIVAAAFYAIWNIFAGFII, WYYWACPVAWTLYGLVVSQFG, and VVGVMVVVFTVLFASIFAFSI.

Belongs to the ABC transporter superfamily. ABCG family. PDR (TC 3.A.1.205) subfamily. Ubiquitous.

Its subcellular location is the cell membrane. May be a general defense protein. Seems involved in turion (dormant buds) formation. Confers resistance to the diterpenoid antifungal agent sclareol. This Spirodela polyrhiza (Giant duckweed) protein is Pleiotropic drug resistance protein TUR2 (TUR2).